A 2552-amino-acid polypeptide reads, in one-letter code: MNHITSKRLDIRATLIFGIFYGILITFSKLTSYLFLIRHWISQDDEGTGKARALSYGFTVGHLLGYLLIYYLPFYKALSNFYLKIILALGLMLYQFFWTNHHLDIFLPKSFSTPQRDQTLAFVYGLSYRLLNYTFFPNSIFSRMIVGYLVQCQFKILFLYTTFFVWMIGHLICIKWVQFLTLWLQKNYSAFLILTHQLYLQDKIKKIRSRTIPIAKIFEYKPDPVMKPGIYRESQTIDEMIQILATILFIVALYLLGKSPIPFVPHSPSAPNAVELARMSRLEEEAKVQREIEDRFYPLEDFDEEQKKDEKSADEEKKRAVEEENQEILDLEEEENQEILDLEEEENQEILDMDEEKGFENTLYTFFSDCFFESFSFYAFLFNRLKFYSGYLFNRLKFCYGYLFDLFSSSSRFLNRIEPLFSPFLVVVKPFYLYFFNFFSVYIPHLKFLKWFLFNHNFVFSAIFRGFSHFFFNPRRWVIPYRYIKTSFYEYSVKKGGFSQFCFYKCQSDGKERTSFTYPLSLITFYKMIEGKLSLFRKKKRLPDRDRLYTLWVLRNAKKKDSLNKELIKRVQKLKSGSPLRDVLDIRRKLFQFKYTPKVLRSISETLFDQMHPSGGKKRENDPVWDGPSRGAFWYNHKLTKTAAEQRVDEEEHLQTMWLFFKDLRPLNQKEQYLILERQKLERESQEKQKLRRQCFEKSLLGKTLRILQKMAPYFRAPQYIPSNSMSRAFKLYRVSAYLTLDWQETTRILRRVHKLRKRGMIIRVNEERESWIRSHKERYLKLKEIRKKRVQLEKEKRRPKKILLRLDKKTKKGTLKKKQKEAFPLNTILTRILVLNSHFRTSSKRKRDSKDRRNLYSYPNPLLEKINKIRRNRNTVYHIMNTYYEGRSGFTHEDIPKMRKKYQKYRQFQLKLRTIMKEVPRWGYNIDDEKIDYSDYNIRNDDVVAEDVYLRTRKAKFRVFRTKVWKYYERHDKRELKQWYFYRYAKITHFRRNMVKGADRTQRRKVTICGWYEHRVQSPLFLPKRRKTLILIMLTLDVFELMKKCYRFLRQDSRFQVRVKRISERINRIWKKLWNLPDSQKSAIEAAIEAENELQGLRESEEDKKKRQERGDALEEWQERREAHEIRAICIAETWELLQSGHAVRSLILLIQSFLRKNVIFPFLIIAKNMARILFFQSPELFQDFADLKKETHTLCDFGGIPLDESQDPIGWFTDGCQIRIHFPFEWKPWRETEQSKESSVAEDLYLTVFGRITNIPFGTARKPYPFFKTVFEELKKKKASQELKNLLTSGIRKLQKKGFLKFKKKGFLRKRLLAFQKKSFQSKLLKGVKVKKRTNLKKGPQSKLTKKKKERKVDKTRAIINEIERVLKEKKKRLFIIQTSISSTKTSSHSKTSEALRRLSKILKRRKARFIRKSTIFRKWIIEWIYVKILFDLKNRFDLKKRFLDEMNKKKSCLKMVAQFFFQFKKKRKNKKIDKAIKGINKKKRKKNRFISTIKKHSFNMRNSQISKSQKTLVFDLSSLSQAYVFYKLSQTEKSSFRVSKFQNLRNCRVGMNRWKEWLRGHFDYYLLSDIRWSRLEAQKWRNKMNQCRTAENHNFKKGDSYEIDSLPINPQKLKFKKHLRYDLLAYSFLNAEYKKDPYVIAPSLVSNNQTAISHLYNIHKESLVNMLTSNYKHLRDSKEKHPLLDMHMDVNRTALRRRMNYNQILFHVEDKKKGSKVVDKVAIDSWVTGQNRVLPAGSLTEDRVGFTEGAMVFLESVLKQLRERRRPYPESLDESFRPEWLKWPLEHLIGYIHKICDMHLYFFSVYALYWPEFYDRHRLAKLGCVFRYEKCYDKRRTPIWKKQKSMAKRKKDLAARKKKMSGKAQSIKIAQREFDLSLILEPEEFEKIEKKNFFDWMGLNNENELEELMERNNDEKKSSFLESSFFLFPEFIQLYNLLNLYAKAEWTTPIHSFLQNGKIRSRSSYADLKVEFDSFNWYMYDKKEWPAKGRPLWDSNRARRRRRHRRALLNLGRKDPRKETTLDIMIDPTERERAYAETISEMKAEEQKKIDEEYEEKKEKRKKEQEEQGKAFDETSYRKNHKKRFARVSTLKPIKYSRFRKTALKDLKKSNYFRYQVHYSLRYLIADFLTNVTRTSQVTNKATNPKLLLVFIKDLIEMSQFGIMGTTQNQLPTLEDILNMGYLVLNPIRTFKRLRWEHVTYQILAISLLHKNQFQKLAYTPGPDNKRDPCLEIGVNKVKQTTYKVRKGRKVVESLSVRRLRVKRWWGLRVSYGKFGCPRSFWTKLVRYLVHPFAIPLKAKARGKKKQSPWSYERVFGLFHWKPEVHPKKKRKRTPWSYERVFGQFHADQMRFFYKIGVCGKFKRECTAILLSLITDPKRANDRIKKLILLDEGVPDTLVEKGLLVPENLLSPRRRRQLRIVNELNKKKKKEKRIPQHKLTPYNKLLKETGRMDLNLLLRELDEREKRQREERLNLVQKKEREQEELRKKEEESKELNRIKKKLMRLRFFLWPNYRLEDLACMNRYWFDTTNGSRFSMLRIRVYPRLKTR.

The next 6 helical transmembrane spans lie at 15 to 35 (LIFGIFYGILITFSKLTSYLF), 54 to 74 (LSYGFTVGHLLGYLLIYYLPF), 78 to 98 (LSNFYLKIILALGLMLYQFFW), 119 to 136 (TLAFVYGLSYRLLNYTFF), 154 to 174 (FKILFLYTTFFVWMIGHLICI), and 243 to 263 (ILATILFIVALYLLGKSPIPF). Positions 304-325 (EEQKKDEKSADEEKKRAVEEEN) are disordered. The span at 305 to 322 (EQKKDEKSADEEKKRAVE) shows a compositional bias: basic and acidic residues. The next 3 membrane-spanning stretches (helical) occupy residues 362–382 (TLYTFFSDCFFESFSFYAFLF), 423–443 (PFLVVVKPFYLYFFNFFSVYI), and 452–472 (FLFNHNFVFSAIFRGFSHFFF). Residues 2045-2077 (MKAEEQKKIDEEYEEKKEKRKKEQEEQGKAFDE) form a disordered region. Positions 2416-2511 (RRRRQLRIVN…IKKKLMRLRF (96 aa)) form a coiled coil.

This sequence belongs to the TIC214 family. Part of the Tic complex.

The protein resides in the plastid. It is found in the chloroplast inner membrane. Functionally, involved in protein precursor import into chloroplasts. May be part of an intermediate translocation complex acting as a protein-conducting channel at the inner envelope. In Pelargonium hortorum (Common geranium), this protein is Protein TIC 214.